The chain runs to 692 residues: Acyl-coenzyme A oxidase 2, peroxisomal (692 aa).

Residues 1–49 (MESRREKNPMTEEESDGLIAARRIQRLSLHLSPSLTPSPSLPLVQTETC) constitute a peroxisome transit peptide. 7 residues coordinate FAD: T186, S192, G225, R365, Q384, G452, and T473. E475 acts as the Proton acceptor in catalysis. D477 contributes to the FAD binding site.

It belongs to the acyl-CoA oxidase family. As to quaternary structure, homodimer. FAD is required as a cofactor. As to expression, expressed mainly in flowers and young seedlings. Lower expression in roots, leaves and bracts.

Its subcellular location is the peroxisome. It catalyses the reaction a 2,3-saturated acyl-CoA + O2 = a (2E)-enoyl-CoA + H2O2. In terms of biological role, catalyzes the desaturation of long-chain acyl-CoAs to 2-trans-enoyl-CoAs. Active on substrates longer than C14 and mostly with C18-CoA. Activity on long-chain mono-unsaturated substrates is double than with the corresponding saturated substrates. This chain is Acyl-coenzyme A oxidase 2, peroxisomal, found in Arabidopsis thaliana (Mouse-ear cress).